We begin with the raw amino-acid sequence, 58 residues long: Small ribosomal subunit protein bS21 (58 aa).

A compositionally biased stretch (basic and acidic residues) spans 32–42; that stretch reads IRKREHYEKPS. The interval 32–58 is disordered; the sequence is IRKREHYEKPSVRRKKKSEAARKRKFN. The span at 43 to 58 shows a compositional bias: basic residues; that stretch reads VRRKKKSEAARKRKFN.

This sequence belongs to the bacterial ribosomal protein bS21 family.

In Lachnospira eligens (strain ATCC 27750 / DSM 3376 / VPI C15-48 / C15-B4) (Eubacterium eligens), this protein is Small ribosomal subunit protein bS21.